Here is a 107-residue protein sequence, read N- to C-terminus: Envelope small membrane protein (107 aa).

Topologically, residues 1 to 11 (MMNLVNKSLEE) are virion surface. The helical transmembrane segment at 12 to 32 (NGSFLTAVYIFCAFVALYLLG) threads the bilayer. Over 33–107 (RALHAFVQAA…NFQNDGKLHS (75 aa)) the chain is Intravirion.

The protein belongs to the gammacoronaviruses E protein family. As to quaternary structure, homooligomer. Interacts with the M membrane protein in the budding compartment of the host cell, which is located between endoplasmic reticulum and the Golgi complex. The cytoplasmic tails of both proteins are important for this function. Interacts with Nucleoprotein.

The protein resides in the host Golgi apparatus membrane. Functionally, plays a central role in virus morphogenesis and assembly. Acts as a viroporin and self-assembles in host membranes forming pentameric protein-lipid pores that allow ion transport. Also plays a role in the induction of apoptosis. The sequence is that of Envelope small membrane protein from Gallus gallus (Chicken).